We begin with the raw amino-acid sequence, 244 residues long: 7-cyano-7-deazaguanine synthase (244 aa).

14 to 24 (FSGGQDSATCV) lines the ATP pocket. Cys-202, Cys-217, Cys-220, and Cys-223 together coordinate Zn(2+).

This sequence belongs to the QueC family. Zn(2+) serves as cofactor.

It carries out the reaction 7-carboxy-7-deazaguanine + NH4(+) + ATP = 7-cyano-7-deazaguanine + ADP + phosphate + H2O + H(+). Its pathway is purine metabolism; 7-cyano-7-deazaguanine biosynthesis. Functionally, catalyzes the ATP-dependent conversion of 7-carboxy-7-deazaguanine (CDG) to 7-cyano-7-deazaguanine (preQ(0)). The polypeptide is 7-cyano-7-deazaguanine synthase (Burkholderia thailandensis (strain ATCC 700388 / DSM 13276 / CCUG 48851 / CIP 106301 / E264)).